The primary structure comprises 513 residues: Probable cytosol aminopeptidase (513 aa).

Residues Lys-275 and Asp-280 each coordinate Mn(2+). Lys-287 is an active-site residue. Positions 298, 357, and 359 each coordinate Mn(2+). Arg-361 is an active-site residue.

It belongs to the peptidase M17 family. Mn(2+) is required as a cofactor.

Its subcellular location is the cytoplasm. It catalyses the reaction Release of an N-terminal amino acid, Xaa-|-Yaa-, in which Xaa is preferably Leu, but may be other amino acids including Pro although not Arg or Lys, and Yaa may be Pro. Amino acid amides and methyl esters are also readily hydrolyzed, but rates on arylamides are exceedingly low.. The catalysed reaction is Release of an N-terminal amino acid, preferentially leucine, but not glutamic or aspartic acids.. In terms of biological role, presumably involved in the processing and regular turnover of intracellular proteins. Catalyzes the removal of unsubstituted N-terminal amino acids from various peptides. This Streptomyces avermitilis (strain ATCC 31267 / DSM 46492 / JCM 5070 / NBRC 14893 / NCIMB 12804 / NRRL 8165 / MA-4680) protein is Probable cytosol aminopeptidase.